A 446-amino-acid chain; its full sequence is CBL-interacting protein kinase 8 (446 aa).

Positions 13 to 266 constitute a Protein kinase domain; that stretch reads YEVGRTIGEG…IEEIRNDEWF (254 aa). Residues 19–27 and lysine 42 each bind ATP; that span reads IGEGTFAKV. Aspartate 136 serves as the catalytic Proton acceptor. An activation loop region spans residues 154–181; sequence DFGLSAWPAQGGALLRTTCGTPNYVAPE. Residues 301 to 329 enclose the NAF domain; the sequence is LDDEAGPLTLNAFDLIILSQGLNLAALFD. The segment at 336–365 is PPI; that stretch reads KLQNRFLSRKPAKVIMSSMEVVAQSMGYKT.

This sequence belongs to the protein kinase superfamily. CAMK Ser/Thr protein kinase family. SNF1 subfamily. The cofactor is Mn(2+).

It carries out the reaction L-seryl-[protein] + ATP = O-phospho-L-seryl-[protein] + ADP + H(+). The catalysed reaction is L-threonyl-[protein] + ATP = O-phospho-L-threonyl-[protein] + ADP + H(+). Its function is as follows. CIPK serine-threonine protein kinases interact with CBL proteins. Binding of a CBL protein to the regulatory NAF domain of CIPK protein lead to the activation of the kinase in a calcium-dependent manner. This is CBL-interacting protein kinase 8 (CIPK8) from Oryza sativa subsp. japonica (Rice).